The chain runs to 162 residues: Meiosis-specific protein HED1 (162 aa).

The interval 67–124 is disordered; sequence KNLSENTGGGSPNGGAYLDAKKGVREQDQYQGGPSKELDRLQPPPSMKKSPPRKKKSL. Basic and acidic residues predominate over residues 85 to 94; that stretch reads DAKKGVREQD.

Interacts with RAD51.

The protein resides in the nucleus. The protein localises to the chromosome. Functionally, involved in regulation of meiotic recombination and repair of DNA damage. Inhibits RAD51-mediated recombination when the meiotic recombination machinery is impaired. The sequence is that of Meiosis-specific protein HED1 (HED1) from Saccharomyces cerevisiae (strain ATCC 204508 / S288c) (Baker's yeast).